Consider the following 65-residue polypeptide: Keratin-associated protein 20-2 (65 aa).

It belongs to the KRTAP type 20 family. As to quaternary structure, interacts with hair keratins.

In terms of biological role, in the hair cortex, hair keratin intermediate filaments are embedded in an interfilamentous matrix, consisting of hair keratin-associated proteins (KRTAP), which are essential for the formation of a rigid and resistant hair shaft through their extensive disulfide bond cross-linking with abundant cysteine residues of hair keratins. The matrix proteins include the high-sulfur and high-glycine-tyrosine keratins. In Homo sapiens (Human), this protein is Keratin-associated protein 20-2 (KRTAP20-2).